Reading from the N-terminus, the 297-residue chain is Endonuclease G, mitochondrial (297 aa).

A mitochondrion-targeting transit peptide spans 1–48 (MRALRAGLTLASGAGLGAVVEGWRRRREDARAAPGLLGRLPVLPVAAA). T128 is modified (phosphothreonine; by GSK3-beta). Catalysis depends on H141, which acts as the Proton acceptor. Mg(2+) is bound at residue N172. The essential for deoxyribonuclease activity stretch occupies residues 286-296 (AGSLKAITAGS). A Phosphoserine; by GSK3-beta modification is found at S288.

This sequence belongs to the DNA/RNA non-specific endonuclease family. Homodimer; disulfide-linked. Homodimerization is essential for enzyme activity. Interacts with YWHAG. Requires Mg(2+) as cofactor. In terms of processing, GSK3-beta-mediated dual phosphorylations at Thr-128 and Ser-288 is necessary for its interaction with YWHAG and the induction of autophagy.

It is found in the mitochondrion. Its function is as follows. Endonuclease that preferentially catalyzes the cleavage of double-stranded 5-hydroxymethylcytosine (5hmC)-modified DNA. The 5hmC-modified nucleotide does not increase the binding affinity, but instead increases the efficiency of cutting and specifies the site of cleavage for the modified DNAs. Shows significantly higher affinity for four-stranded Holliday junction over duplex and single-stranded DNAs. Promotes conservative recombination when the DNA is 5hmC-modified. Promotes autophagy through the suppression of mTOR by its phosphorylation-mediated interaction with YWHAG and its endonuclease activity-mediated DNA damage response. GSK3-beta mediated phosphorylation of ENDOG enhances its interaction with YWHAG, leading to the release of TSC2 and PIK3C3 from YWHAG resulting in mTOR pathway suppression and autophagy initiation. Promotes cleavage of mtDNA in response to oxidative and nitrosative stress, in turn inducing compensatory mtDNA replication. This Homo sapiens (Human) protein is Endonuclease G, mitochondrial (ENDOG).